Here is a 181-residue protein sequence, read N- to C-terminus: uncharacterized protein (181 aa).

4 helical membrane passes run 3-23 (LSQT…VLIL), 67-87 (ALLL…GLSV), 92-112 (VLGV…VLFI), and 159-179 (MFIL…LWII).

This sequence belongs to the YggT family.

Its subcellular location is the cell membrane. This is an uncharacterized protein from Haemophilus influenzae (strain ATCC 51907 / DSM 11121 / KW20 / Rd).